Consider the following 309-residue polypeptide: Probable RuBisCO transcriptional regulator (309 aa).

The HTH lysR-type domain occupies 5-62 (FTLQQLRILKAIATEKSFTRAAEVLFVSQPSLSKQIKTLESRLNISLLNRENNIVSLT). The H-T-H motif DNA-binding region spans 22–41 (FTRAAEVLFVSQPSLSKQIK).

Belongs to the LysR transcriptional regulatory family.

The protein resides in the plastid. The protein localises to the chloroplast. In terms of biological role, trans-acting transcriptional regulator of RuBisCO genes (rbcL and rbcS) expression. The sequence is that of Probable RuBisCO transcriptional regulator (rbcR) from Trieres chinensis (Marine centric diatom).